The following is a 219-amino-acid chain: Response regulator ArlR (219 aa).

The Response regulatory domain occupies 3 to 116 (NILIVEDEQN…ELLARIRAVL (114 aa)). The residue at position 52 (aspartate 52) is a 4-aspartylphosphate. Positions 122–219 (KDVLDINGII…TVRGVGYVIR (98 aa)) form a DNA-binding region, ompR/PhoB-type.

Post-translationally, phosphorylated by ArlS.

It localises to the cytoplasm. In terms of biological role, member of the two-component regulatory system ArlS/ArlR. This is Response regulator ArlR (arlR) from Staphylococcus epidermidis (strain ATCC 12228 / FDA PCI 1200).